The primary structure comprises 360 residues: G-protein coupled receptor 15 (360 aa).

Residues 1–33 are Extracellular-facing; the sequence is MEPATALLIVDYYDYTSPDPPFLETPSHLSYTS. A helical membrane pass occupies residues 34-54; sequence VFLPIFYTVVFLTGVVGNFIL. Residues 55–69 are Cytoplasmic-facing; sequence MIALHFKRGNRRLID. The helical transmembrane segment at 70–90 threads the bilayer; the sequence is IFIINLAASDFIFLVTVPLWM. Topologically, residues 91 to 120 are extracellular; sequence DKEASLGLWRTGSFLCKGSSYVISVNMHCS. Residues 121–141 form a helical membrane-spanning segment; that stretch reads VFLLTCMSMDRYLAIMHPALA. The Cytoplasmic portion of the chain corresponds to 142–149; it reads KRLRRRSS. The chain crosses the membrane as a helical span at residues 150 to 170; it reads AYAVCAVVWIISCVLGLPTLL. The Extracellular segment spans residues 171-192; the sequence is SRELTHIEGKPYCAEKKPTSLK. The helical transmembrane segment at 193–213 threads the bilayer; the sequence is LMWGLVALITTFFVPLLSIVT. The Cytoplasmic segment spans residues 214-239; that stretch reads CYCCITRRLCAHYQQSGKHNKKLKKS. The helical transmembrane segment at 240 to 260 threads the bilayer; sequence IKIVIIAVAAFTVSWVPFNTF. The Extracellular segment spans residues 261 to 284; that stretch reads KLLAIVSGFQPEGLFHSEALQLAM. A helical transmembrane segment spans residues 285–305; sequence NVTGPLAFASSCVNPLIYYVF. The Cytoplasmic segment spans residues 306–360; sequence DSYIRRAIVRCLCPCLKTHNFGSSTETSDSHLTKALSNFIHAEDFIRRRKRSVSL. S359 carries the post-translational modification Phosphoserine.

It belongs to the G-protein coupled receptor 1 family. As to quaternary structure, interacts with adapter YWHAE; this interaction promotes ER-to-Golgi transport of GPR15. Phosphorylation is necessary for YWHAE binding and efficient surface expression. In terms of processing, O-glycosylated. Sialylated O-glycans in the N-terminal tail inhibits binding of GPR15LG. Post-translationally, sulfation is required for efficient binding of GPR15LG. Highly expressed in gut tissues and lymphoid organs, largely restricted to TCRbeta+ cells. Expressed in fetal thymic dendritic epidermal T-cell precursors.

Its subcellular location is the cell membrane. Its function is as follows. G protein-coupled receptor that plays an important role in immune homeostasis. Acts via its natural ligand GPR15LG, a chemokine-like polypeptide strongly expressed in gastrointestinal tissues. GPR15-GPR15LG signaling axis regulates intestinal homeostasis and inflammation through the migration of immune cells. Controls thereby the specific homing of T-cells, particularly FOXP3+ regulatory T-cells (Tregs), to the large intestine lamina propria. Also required for skin localization of thymus-derived dendritic epidermal T-cells. Plays an important role in mediating cytoprotective function as well as angiogenesis of thrombomodulin. Mechanistically, preferentially signals through the Gi/o pathway to inhibit adenylate cyclase activity and activate a phosphatidylinositol-calcium second messenger system that regulates the release of Ca(2+) ions from intracellular stores. This chain is G-protein coupled receptor 15 (Gpr15), found in Mus musculus (Mouse).